The following is a 426-amino-acid chain: Histidine--tRNA ligase (426 aa).

Belongs to the class-II aminoacyl-tRNA synthetase family. In terms of assembly, homodimer.

It localises to the cytoplasm. The enzyme catalyses tRNA(His) + L-histidine + ATP = L-histidyl-tRNA(His) + AMP + diphosphate + H(+). This Shewanella baltica (strain OS195) protein is Histidine--tRNA ligase.